We begin with the raw amino-acid sequence, 329 residues long: Protein mlo2 (329 aa).

The segment at 33–104 (DTCTYSMGYL…HSIPCNLRKS (72 aa)) adopts a UBR-type zinc-finger fold. The PHD-type zinc-finger motif lies at 120 to 179 (GRFCICDTVYNPETEEGTMFQCILCEDWFHEKCLQKTNKGIAIPDAETFEWLVCSECSEK).

The protein belongs to the UBR7 family.

Not known, interfere with mitotic chromosome segregation when overexpressed. In Schizosaccharomyces pombe (strain 972 / ATCC 24843) (Fission yeast), this protein is Protein mlo2 (mlo2).